The sequence spans 774 residues: Alpha,alpha-trehalose phosphorylase (774 aa).

369–370 is a substrate binding site; the sequence is WD. The Proton donor role is filled by Glu498. 610 to 611 is a binding site for substrate; sequence KQ.

The protein belongs to the glycosyl hydrolase 65 family. In terms of assembly, homodimer.

It carries out the reaction alpha,alpha-trehalose + phosphate = beta-D-glucose 1-phosphate + D-glucose. The protein operates within glycan degradation; trehalose degradation. Its activity is regulated as follows. Inhibited by Cu(2+), Hg(2+), Mg(2+), Mn(2+), Pb(2+) and Zn(2+). Its function is as follows. Catalyzes the reversible phosphorolytic cleavage of trehalose. Phosphorolysis is specific for trehalose, but D-xylose, D-galactose, L-arabinose, D-fucose, L-fucose, D-glucosamine and 2-deoxy D-glucose can act as substitutes for D-glucose in the synthetic reaction. The protein is Alpha,alpha-trehalose phosphorylase (treP) of Thermoanaerobacter brockii (Thermoanaerobium brockii).